Consider the following 1279-residue polypeptide: ATP-dependent helicase/nuclease subunit A (1279 aa).

The 496-residue stretch at 4–499 (TKWTDEQRQA…VKLFKNFRSR (496 aa)) folds into the UvrD-like helicase ATP-binding domain. 25-32 (AGAGAGKT) provides a ligand contact to ATP. Residues 526–853 (EEALKVGASY…RIMSIHKSKG (328 aa)) form the UvrD-like helicase C-terminal domain.

This sequence belongs to the helicase family. AddA subfamily. As to quaternary structure, heterodimer of AddA and AddB/RexB. The cofactor is Mg(2+).

It catalyses the reaction Couples ATP hydrolysis with the unwinding of duplex DNA by translocating in the 3'-5' direction.. The enzyme catalyses ATP + H2O = ADP + phosphate + H(+). In terms of biological role, the heterodimer acts as both an ATP-dependent DNA helicase and an ATP-dependent, dual-direction single-stranded exonuclease. Recognizes the chi site generating a DNA molecule suitable for the initiation of homologous recombination. The AddA nuclease domain is required for chi fragment generation; this subunit has the helicase and 3' -&gt; 5' nuclease activities. The protein is ATP-dependent helicase/nuclease subunit A of Clostridium botulinum (strain ATCC 19397 / Type A).